The primary structure comprises 269 residues: Protein CURLY FLAG LEAF 1 (269 aa).

The interval 17 to 44 (SLNGGGGGGGGRRRGRRAAAAEGSDDSE) is disordered. The short motif at 47-52 (TVELNS) is the EAR element. Residues 54–88 (VALPYHWEQCLDIRTGQVYYINWEDGTRTTIDPRS) form the WW domain. Disordered regions lie at residues 83–133 (TIDP…SGYT) and 174–218 (GDDE…SGAG). Composition is skewed to low complexity over residues 87 to 106 (RSSS…SSSR), 121 to 133 (AAAA…SGYT), and 180 to 202 (SSSS…AVSS). Polar residues predominate over residues 203–212 (TLSSFSPTDE).

In terms of assembly, binds to HDG1.

Negatively regulates the cuticle development probably by interacting with the HD-ZIP IV transcription factor HDG1. This chain is Protein CURLY FLAG LEAF 1, found in Oryza sativa subsp. indica (Rice).